A 170-amino-acid chain; its full sequence is 6,7-dimethyl-8-ribityllumazine synthase (170 aa).

Residues W25, 57–59, and 79–81 each bind 5-amino-6-(D-ribitylamino)uracil; these read AVE and AVI. Residue 84–85 participates in (2S)-2-hydroxy-3-oxobutyl phosphate binding; the sequence is DT. The active-site Proton donor is H87. N112 serves as a coordination point for 5-amino-6-(D-ribitylamino)uracil. Residue R126 coordinates (2S)-2-hydroxy-3-oxobutyl phosphate.

The protein belongs to the DMRL synthase family.

The enzyme catalyses (2S)-2-hydroxy-3-oxobutyl phosphate + 5-amino-6-(D-ribitylamino)uracil = 6,7-dimethyl-8-(1-D-ribityl)lumazine + phosphate + 2 H2O + H(+). Its pathway is cofactor biosynthesis; riboflavin biosynthesis; riboflavin from 2-hydroxy-3-oxobutyl phosphate and 5-amino-6-(D-ribitylamino)uracil: step 1/2. Functionally, catalyzes the formation of 6,7-dimethyl-8-ribityllumazine by condensation of 5-amino-6-(D-ribitylamino)uracil with 3,4-dihydroxy-2-butanone 4-phosphate. This is the penultimate step in the biosynthesis of riboflavin. This Thermobifida fusca (strain YX) protein is 6,7-dimethyl-8-ribityllumazine synthase.